We begin with the raw amino-acid sequence, 815 residues long: Leucine--tRNA ligase (815 aa).

Positions 41 to 51 match the 'HIGH' region motif; that stretch reads PYPSGTLHVGH. A 'KMSKS' region motif is present at residues 576–580; that stretch reads KMSKS. K579 serves as a coordination point for ATP.

The protein belongs to the class-I aminoacyl-tRNA synthetase family.

Its subcellular location is the cytoplasm. The catalysed reaction is tRNA(Leu) + L-leucine + ATP = L-leucyl-tRNA(Leu) + AMP + diphosphate. The chain is Leucine--tRNA ligase from Pseudothermotoga lettingae (strain ATCC BAA-301 / DSM 14385 / NBRC 107922 / TMO) (Thermotoga lettingae).